We begin with the raw amino-acid sequence, 513 residues long: ATP synthase subunit alpha (513 aa).

169–176 (GDRQCGKT) contributes to the ATP binding site.

This sequence belongs to the ATPase alpha/beta chains family. In terms of assembly, F-type ATPases have 2 components, CF(1) - the catalytic core - and CF(0) - the membrane proton channel. CF(1) has five subunits: alpha(3), beta(3), gamma(1), delta(1), epsilon(1). CF(0) has three main subunits: a(1), b(2) and c(9-12). The alpha and beta chains form an alternating ring which encloses part of the gamma chain. CF(1) is attached to CF(0) by a central stalk formed by the gamma and epsilon chains, while a peripheral stalk is formed by the delta and b chains.

The protein resides in the cell inner membrane. It catalyses the reaction ATP + H2O + 4 H(+)(in) = ADP + phosphate + 5 H(+)(out). Produces ATP from ADP in the presence of a proton gradient across the membrane. The alpha chain is a regulatory subunit. This is ATP synthase subunit alpha from Burkholderia vietnamiensis (strain G4 / LMG 22486) (Burkholderia cepacia (strain R1808)).